Reading from the N-terminus, the 143-residue chain is Nucleoside diphosphate kinase (143 aa).

6 residues coordinate ATP: Lys11, Phe59, Arg87, Thr93, Arg104, and Asn114. His117 acts as the Pros-phosphohistidine intermediate in catalysis.

This sequence belongs to the NDK family. In terms of assembly, homotetramer. Mg(2+) serves as cofactor.

Its subcellular location is the cytoplasm. The enzyme catalyses a 2'-deoxyribonucleoside 5'-diphosphate + ATP = a 2'-deoxyribonucleoside 5'-triphosphate + ADP. It catalyses the reaction a ribonucleoside 5'-diphosphate + ATP = a ribonucleoside 5'-triphosphate + ADP. Functionally, major role in the synthesis of nucleoside triphosphates other than ATP. The ATP gamma phosphate is transferred to the NDP beta phosphate via a ping-pong mechanism, using a phosphorylated active-site intermediate. The chain is Nucleoside diphosphate kinase from Stutzerimonas stutzeri (strain A1501) (Pseudomonas stutzeri).